Reading from the N-terminus, the 64-residue chain is Conotoxin Cal12.4 (64 aa).

The N-terminal stretch at 1–21 (MKLTCMLVVLLLVLPFGDLIA) is a signal peptide.

This sequence belongs to the conotoxin O1 superfamily. Post-translationally, contains 4 disulfide bonds. In terms of tissue distribution, expressed by the venom duct.

It is found in the secreted. Its function is as follows. Probable neurotoxin. This is Conotoxin Cal12.4 from Californiconus californicus (California cone).